A 294-amino-acid chain; its full sequence is Cutinase (294 aa).

An N-terminal signal peptide occupies residues 1-33 (MLRARPSHRLASAAAVVAATGAALLAGSSPAAA). Cys36 and Cys107 are oxidised to a cystine. The active-site Nucleophile is the Ser118. Cys180 and Cys187 form a disulfide bridge. Asp184 is a catalytic residue. The active-site Proton donor/acceptor is His198. Residues 222–241 (GTPTTPTPTPTPTPVPTTCV) are disordered. Pro residues predominate over residues 226–236 (TPTPTPTPTPV). A may be involved in substrate binding region spans residues 240–294 (CVRDSTRDHVAADRAVSLYGRAYARGSRDSLGATSSYNVVSLQQVEGGWRLVTAC).

Belongs to the cutinase family.

The protein localises to the secreted. The enzyme catalyses cutin + H2O = cutin monomers.. The catalysed reaction is a tetradecanoate ester + H2O = an aliphatic alcohol + tetradecanoate + H(+). It catalyses the reaction hexadecanoate ester + H2O = an aliphatic alcohol + hexadecanoate + H(+). It carries out the reaction a butanoate ester + H2O = an aliphatic alcohol + butanoate + H(+). The enzyme catalyses an octanoate ester + H2O = an aliphatic alcohol + octanoate + H(+). Its function is as follows. Catalyzes the hydrolysis of cutin, a polyester that forms the structure of plant cuticle. Shows esterase activity towards p-nitrophenol-linked aliphatic esters (pNP-aliphatic esters). Can depolymerize synthetic polyesters such as poly(epsilon-caprolactone) (PCL) and poly(1,3-propylene adipate) (PPA). Exhibits some activity on poly(lactic acid) (PLA). Can bind but not hydrolyze poly(hydroxybutyrate) (PHB). This chain is Cutinase, found in Kineococcus radiotolerans (strain ATCC BAA-149 / DSM 14245 / SRS30216).